Here is a 230-residue protein sequence, read N- to C-terminus: U2 small nuclear ribonucleoprotein A' (230 aa).

5 LRR repeats span residues serine 15 to threonine 36, glycine 48 to glutamate 69, histidine 71 to glutamate 92, threonine 93 to alanine 114, and lysine 115 to lysine 136. One can recognise an LRRCT domain in the interval asparagine 149–methionine 187.

The protein belongs to the U2 small nuclear ribonucleoprotein A family. Associated with the spliceosome.

The protein localises to the nucleus. Its function is as follows. Involved in pre-mRNA splicing. This chain is U2 small nuclear ribonucleoprotein A' (LEA1), found in Yarrowia lipolytica (strain CLIB 122 / E 150) (Yeast).